Reading from the N-terminus, the 258-residue chain is Triosephosphate isomerase (258 aa).

11 to 13 (NWK) is a binding site for substrate. His-101 serves as the catalytic Electrophile. Glu-173 acts as the Proton acceptor in catalysis. Residues Gly-179, Ser-219, and 240–241 (GG) contribute to the substrate site.

This sequence belongs to the triosephosphate isomerase family. In terms of assembly, homodimer.

It localises to the cytoplasm. It carries out the reaction D-glyceraldehyde 3-phosphate = dihydroxyacetone phosphate. The protein operates within carbohydrate biosynthesis; gluconeogenesis. It functions in the pathway carbohydrate degradation; glycolysis; D-glyceraldehyde 3-phosphate from glycerone phosphate: step 1/1. Functionally, involved in the gluconeogenesis. Catalyzes stereospecifically the conversion of dihydroxyacetone phosphate (DHAP) to D-glyceraldehyde-3-phosphate (G3P). This is Triosephosphate isomerase from Streptomyces avermitilis (strain ATCC 31267 / DSM 46492 / JCM 5070 / NBRC 14893 / NCIMB 12804 / NRRL 8165 / MA-4680).